We begin with the raw amino-acid sequence, 319 residues long: tRNA pseudouridine synthase B (319 aa).

Catalysis depends on Asp-47, which acts as the Nucleophile.

The protein belongs to the pseudouridine synthase TruB family. Type 1 subfamily.

The catalysed reaction is uridine(55) in tRNA = pseudouridine(55) in tRNA. Responsible for synthesis of pseudouridine from uracil-55 in the psi GC loop of transfer RNAs. In Pseudoalteromonas translucida (strain TAC 125), this protein is tRNA pseudouridine synthase B.